A 107-amino-acid polypeptide reads, in one-letter code: Theromyzin (107 aa).

An N-terminal signal peptide occupies residues 1 to 21 (MHAKIILALFLGMTAFLAVQA).

As to expression, coelomic liquid (at protein level). Expressed in large fat cells in contact with coelomic cavities, in intestinal epithelia and at the epidermis level.

The protein localises to the secreted. Has bacteriostatic activity against M.luteus. No activity toward E.coli and F.oxysporum. The chain is Theromyzin from Theromyzon tessulatum (Duck leech).